A 556-amino-acid polypeptide reads, in one-letter code: Endoglucanase 22 (556 aa).

Residues Met-1–Ala-33 form the signal peptide. Catalysis depends on Asp-108, which acts as the Nucleophile. Active-site residues include His-450, Asp-502, and Glu-511.

This sequence belongs to the glycosyl hydrolase 9 (cellulase E) family.

The protein localises to the secreted. It catalyses the reaction Endohydrolysis of (1-&gt;4)-beta-D-glucosidic linkages in cellulose, lichenin and cereal beta-D-glucans.. This Oryza sativa subsp. japonica (Rice) protein is Endoglucanase 22 (GLU11).